We begin with the raw amino-acid sequence, 273 residues long: Large ribosomal subunit protein uL2 (273 aa).

The segment at 221-263 (RGTAMNPVDHPHGGGEGRNFGKHPVTPWGVQTKGKKTRHNKRT) is disordered. Basic residues predominate over residues 253-263 (KGKKTRHNKRT).

This sequence belongs to the universal ribosomal protein uL2 family. In terms of assembly, part of the 50S ribosomal subunit. Forms a bridge to the 30S subunit in the 70S ribosome.

In terms of biological role, one of the primary rRNA binding proteins. Required for association of the 30S and 50S subunits to form the 70S ribosome, for tRNA binding and peptide bond formation. It has been suggested to have peptidyltransferase activity; this is somewhat controversial. Makes several contacts with the 16S rRNA in the 70S ribosome. The chain is Large ribosomal subunit protein uL2 from Histophilus somni (strain 2336) (Haemophilus somnus).